A 564-amino-acid chain; its full sequence is Bifunctional sesquiterpene synthase 1 (564 aa).

Residues Asp-317, Asp-321, Asp-461, and Glu-469 each coordinate Mg(2+). The DDXXD motif signature appears at 317-321; sequence DDTFD.

This sequence belongs to the terpene synthase family. Requires Mg(2+) as cofactor.

The enzyme catalyses (2E,6E)-farnesyl diphosphate = alpha-copaene + diphosphate. The catalysed reaction is (2E,6E)-farnesyl diphosphate = delta-cadinene + diphosphate. Its pathway is secondary metabolite biosynthesis; terpenoid biosynthesis. Its function is as follows. Sesquiterpene synthase converting farnesyl diphosphate to alpha copaene and delta-cadinene as the major products. The sequence is that of Bifunctional sesquiterpene synthase 1 from Phyla dulcis (Aztec sweet herb).